The primary structure comprises 1948 residues: [F-actin]-monooxygenase MICAL2 (1948 aa).

A monooxygenase domain region spans residues 2–494 (GENEDEKQAQ…KHLYITKEMD (493 aa)). FAD is bound by residues Cys-97, 116 to 118 (EKR), 123 to 125 (RNN), Phe-183, Tyr-298, and Asp-398. A Calponin-homology (CH) domain is found at 516–619 (DIRPNKLLTW…MVMYLSKFYE (104 aa)). Ser-631 carries the phosphoserine modification. The short motif at 660-681 (RKRTPRVDAQTEENDVNKRRRQ) is the Nuclear localization signal element. Disordered regions lie at residues 664–709 (PRVD…ESGN), 753–776 (SRPP…PPLK), and 891–923 (KRVP…DSVS). Positions 693–709 (SSRSLGSSQEYAKESGN) are enriched in polar residues. The span at 896–917 (AHPPSPPSCLPSPDPAAAPSPP) shows a compositional bias: pro residues. The 63-residue stretch at 980–1042 (DTCYFCKKRV…KLHFAHCKTS (63 aa)) folds into the LIM zinc-binding domain. Zn(2+) is bound by residues Cys-982, Cys-985, His-1003, Cys-1006, Cys-1009, Cys-1012, Cys-1032, and His-1035. Disordered stretches follow at residues 1045 to 1134 (QRKR…GQDG), 1146 to 1185 (SEDS…QPLT), and 1233 to 1298 (QSNS…DDVS). The span at 1050–1059 (AELNQQREEE) shows a compositional bias: basic and acidic residues. Over residues 1233-1243 (QSNSTPMNQRA) the composition is skewed to polar residues. Positions 1254 to 1271 (SSSSSPSLPSSFSSASVP) are enriched in low complexity. Polar residues predominate over residues 1277 to 1292 (DSSSPQVTYNLHSPQI). The interaction with MAPK1 stretch occupies residues 1300–1339 (TPIYLRRARAQGITKEIPLYLPHSPMLESTEHCLVSPDGE). Disordered stretches follow at residues 1478-1505 (QKKA…KSPL), 1519-1622 (SSEA…SSKV), 1672-1726 (GDFF…QAGK), and 1739-1767 (SGPG…QLSS). Residues 1522-1534 (AGKKTSSKPETKT) are compositionally biased toward basic and acidic residues. The segment covering 1570-1579 (KASAFFSLAS) has biased composition (low complexity). Positions 1580–1591 (PTSKAAQASDLS) are enriched in polar residues. The segment covering 1672–1682 (GDFFNSPKEKG) has biased composition (basic and acidic residues). Position 1677 is a phosphoserine (Ser-1677). Composition is skewed to polar residues over residues 1698-1715 (VDST…TGQD) and 1747-1756 (EDTSSPTSSS). In terms of domain architecture, bMERB spans 1786–1936 (KQEELKRLHK…ERTQDQHFEN (151 aa)).

This sequence belongs to the Mical family. As to quaternary structure, interacts with PLXNA4. Interacts with RAB1B. Interacts with MAPK1/ERK2. Interacts with RAB35, RAB8A, RAB10, RAB13 and RAB15 (in their GTP-bound forms); binding to RAB35 is of low affinity compared to other Rab proteins; at least in case of RAB8A may bind 2 molecules of RAB8A simultaneously through a high and a low affinity binding site, respectively. May interact with MAPK1/ERK2. It depends on FAD as a cofactor.

The protein localises to the nucleus. The protein resides in the cytoplasm. It carries out the reaction L-methionyl-[F-actin] + NADPH + O2 + H(+) = L-methionyl-(R)-S-oxide-[F-actin] + NADP(+) + H2O. In terms of biological role, methionine monooxygenase that promotes depolymerization of F-actin by mediating oxidation of residues 'Met-44' and 'Met-47' on actin to form methionine-sulfoxide, resulting in actin filament disassembly and preventing repolymerization. Regulates the disassembly of branched actin networks also by oxidizing ARP3B-containing ARP2/3 complexes leading to ARP3B dissociation from the network. Acts as a key regulator of the SRF signaling pathway elicited by nerve growth factor and serum: mediates oxidation and subsequent depolymerization of nuclear actin, leading to increase MKL1/MRTF-A presence in the nucleus and promote SRF:MKL1/MRTF-A-dependent gene transcription. Does not activate SRF:MKL1/MRTF-A through RhoA. This is [F-actin]-monooxygenase MICAL2 from Rattus norvegicus (Rat).